The sequence spans 275 residues: Ribosomal RNA small subunit methyltransferase A (275 aa).

Positions 20, 22, 47, 68, 90, and 110 each coordinate S-adenosyl-L-methionine.

It belongs to the class I-like SAM-binding methyltransferase superfamily. rRNA adenine N(6)-methyltransferase family. RsmA subfamily.

Its subcellular location is the cytoplasm. It carries out the reaction adenosine(1518)/adenosine(1519) in 16S rRNA + 4 S-adenosyl-L-methionine = N(6)-dimethyladenosine(1518)/N(6)-dimethyladenosine(1519) in 16S rRNA + 4 S-adenosyl-L-homocysteine + 4 H(+). Functionally, specifically dimethylates two adjacent adenosines (A1518 and A1519) in the loop of a conserved hairpin near the 3'-end of 16S rRNA in the 30S particle. May play a critical role in biogenesis of 30S subunits. This is Ribosomal RNA small subunit methyltransferase A from Chlorobaculum tepidum (strain ATCC 49652 / DSM 12025 / NBRC 103806 / TLS) (Chlorobium tepidum).